A 97-amino-acid chain; its full sequence is UPF0473 protein Exig_2070 (97 aa).

The protein belongs to the UPF0473 family.

In Exiguobacterium sibiricum (strain DSM 17290 / CCUG 55495 / CIP 109462 / JCM 13490 / 255-15), this protein is UPF0473 protein Exig_2070.